Consider the following 192-residue polypeptide: FMN-dependent NADH:quinone oxidoreductase 1 (192 aa).

FMN is bound by residues serine 9 and 15-17; that span reads SYS.

It belongs to the azoreductase type 1 family. In terms of assembly, homodimer. The cofactor is FMN.

The enzyme catalyses 2 a quinone + NADH + H(+) = 2 a 1,4-benzosemiquinone + NAD(+). The catalysed reaction is N,N-dimethyl-1,4-phenylenediamine + anthranilate + 2 NAD(+) = 2-(4-dimethylaminophenyl)diazenylbenzoate + 2 NADH + 2 H(+). Quinone reductase that provides resistance to thiol-specific stress caused by electrophilic quinones. In terms of biological role, also exhibits azoreductase activity. Catalyzes the reductive cleavage of the azo bond in aromatic azo compounds to the corresponding amines. In Colwellia psychrerythraea (strain 34H / ATCC BAA-681) (Vibrio psychroerythus), this protein is FMN-dependent NADH:quinone oxidoreductase 1.